The primary structure comprises 120 residues: Large ribosomal subunit protein bL20 (120 aa).

This sequence belongs to the bacterial ribosomal protein bL20 family.

Its function is as follows. Binds directly to 23S ribosomal RNA and is necessary for the in vitro assembly process of the 50S ribosomal subunit. It is not involved in the protein synthesizing functions of that subunit. The chain is Large ribosomal subunit protein bL20 from Baumannia cicadellinicola subsp. Homalodisca coagulata.